Here is a 323-residue protein sequence, read N- to C-terminus: Protoheme IX farnesyltransferase (323 aa).

A run of 9 helical transmembrane segments spans residues 28–48 (IIPL…NGQV), 50–70 (PVLL…AQTL), 99–119 (HALI…VVFV), 122–142 (ASAL…THML), 150–170 (IVIG…AVTG), 178–198 (ALFA…ALMI), 223–243 (IWIY…PLAA), 244–264 (SGIV…YKTW), and 279–299 (LFKY…VDSL).

Belongs to the UbiA prenyltransferase family. Protoheme IX farnesyltransferase subfamily.

It is found in the cell inner membrane. The catalysed reaction is heme b + (2E,6E)-farnesyl diphosphate + H2O = Fe(II)-heme o + diphosphate. It functions in the pathway porphyrin-containing compound metabolism; heme O biosynthesis; heme O from protoheme: step 1/1. Functionally, converts heme B (protoheme IX) to heme O by substitution of the vinyl group on carbon 2 of heme B porphyrin ring with a hydroxyethyl farnesyl side group. This Gloeothece citriformis (strain PCC 7424) (Cyanothece sp. (strain PCC 7424)) protein is Protoheme IX farnesyltransferase.